A 208-amino-acid chain; its full sequence is Large ribosomal subunit protein bL9 (208 aa).

Residues Gly-168–Glu-208 form a disordered region. Over residues Asn-188–Ser-197 the composition is skewed to polar residues. Over residues Glu-199–Glu-208 the composition is skewed to basic and acidic residues.

This sequence belongs to the bacterial ribosomal protein bL9 family.

In terms of biological role, binds to the 23S rRNA. The protein is Large ribosomal subunit protein bL9 of Ehrlichia chaffeensis (strain ATCC CRL-10679 / Arkansas).